The sequence spans 425 residues: Kynurenine/alpha-aminoadipate aminotransferase, mitochondrial (425 aa).

The transit peptide at 1–29 (MNYSRFLTATSLARKTSPIRATVEIMSRA) directs the protein to the mitochondrion. Arginine 20 contacts substrate. Serine 40 carries the post-translational modification Phosphoserine. Residues tyrosine 74 and tyrosine 142 each coordinate substrate. Lysine 172 is subject to N6-succinyllysine. Position 179 is an N6-acetyllysine (lysine 179). Residues 179-188 (KPEDSKDPTK) show a composition bias toward basic and acidic residues. The interval 179–208 (KPEDSKDPTKRTPKFLYTIPNGNNPTGNSL) is disordered. Residues 198-208 (PNGNNPTGNSL) are compositionally biased toward polar residues. Asparagine 202 lines the substrate pocket. Lysine 263 bears the N6-(pyridoxal phosphate)lysine; alternate mark. Lysine 263 and lysine 339 each carry N6-acetyllysine; alternate. N6-succinyllysine; alternate occurs at positions 263 and 339. The residue at position 351 (lysine 351) is an N6-acetyllysine. Lysine 367 carries the N6-acetyllysine; alternate modification. Lysine 367 carries the post-translational modification N6-succinyllysine; alternate. Arginine 399 provides a ligand contact to substrate. The residue at position 422 (lysine 422) is an N6-acetyllysine.

It belongs to the class-I pyridoxal-phosphate-dependent aminotransferase family. As to quaternary structure, homodimer. Pyridoxal 5'-phosphate is required as a cofactor. In terms of processing, the N-terminus is blocked.

It localises to the mitochondrion. The catalysed reaction is L-kynurenine + 2-oxoglutarate = kynurenate + L-glutamate + H2O. It carries out the reaction L-2-aminoadipate + 2-oxoglutarate = 2-oxoadipate + L-glutamate. The enzyme catalyses glycine + 2-oxoglutarate = glyoxylate + L-glutamate. It catalyses the reaction L-kynurenine + glyoxylate = kynurenate + glycine + H2O. The catalysed reaction is 3-hydroxy-L-kynurenine + glyoxylate = xanthurenate + glycine + H2O. It carries out the reaction 2-oxohexanoate + L-kynurenine = L-2-aminohexanoate + kynurenate + H2O. The enzyme catalyses 3-phenylpyruvate + L-kynurenine = kynurenate + L-phenylalanine + H2O. It catalyses the reaction 4-methylsulfanyl-2-oxobutanoate + L-kynurenine = kynurenate + L-methionine + H2O. The catalysed reaction is 2-oxo-3-sulfanylpropanoate + L-kynurenine = kynurenate + L-cysteine + H2O. It carries out the reaction indole-3-pyruvate + L-kynurenine = kynurenate + L-tryptophan + H2O. The enzyme catalyses 2-oxopentanoate + L-kynurenine = L-2-aminopentanoate + kynurenate + H2O. It catalyses the reaction 4-methyl-2-oxopentanoate + L-kynurenine = kynurenate + L-leucine + H2O. The catalysed reaction is glyoxylate + L-methionine = 4-methylsulfanyl-2-oxobutanoate + glycine. It carries out the reaction L-2-aminoadipate + glyoxylate = 2-oxoadipate + glycine. The enzyme catalyses L-tyrosine + glyoxylate = 3-(4-hydroxyphenyl)pyruvate + glycine. It catalyses the reaction glyoxylate + L-phenylalanine = 3-phenylpyruvate + glycine. The catalysed reaction is L-tryptophan + glyoxylate = indole-3-pyruvate + glycine. It carries out the reaction L-leucine + glyoxylate = 4-methyl-2-oxopentanoate + glycine. The enzyme catalyses 2-oxobutanoate + L-kynurenine = (2S)-2-aminobutanoate + kynurenate + H2O. It catalyses the reaction 2-oxoadipate + L-kynurenine = L-2-aminoadipate + kynurenate + H2O. The catalysed reaction is 2-oxoadipate + L-kynurenine = 4-(2-aminophenyl)-2,4-dioxobutanoate + L-2-aminoadipate. It functions in the pathway amino-acid degradation; L-lysine degradation via saccharopine pathway; glutaryl-CoA from L-lysine: step 4/6. In terms of biological role, transaminase with broad substrate specificity. Has transaminase activity towards aminoadipate, kynurenine, methionine and glutamate. Shows activity also towards tryptophan, aspartate and hydroxykynurenine. Accepts a variety of oxo-acids as amino-group acceptors, with a preference for 2-oxoglutarate, 2-oxocaproic acid, phenylpyruvate and alpha-oxo-gamma-methiol butyric acid. Can also use glyoxylate as amino-group acceptor (in vitro). This Rattus norvegicus (Rat) protein is Kynurenine/alpha-aminoadipate aminotransferase, mitochondrial.